The sequence spans 549 residues: Chaperonin GroEL (549 aa).

ATP contacts are provided by residues T30–P33, K51, D87–T91, G415, and D495.

Belongs to the chaperonin (HSP60) family. In terms of assembly, forms a cylinder of 14 subunits composed of two heptameric rings stacked back-to-back. Interacts with the co-chaperonin GroES.

The protein resides in the cytoplasm. It carries out the reaction ATP + H2O + a folded polypeptide = ADP + phosphate + an unfolded polypeptide.. Its function is as follows. Together with its co-chaperonin GroES, plays an essential role in assisting protein folding. The GroEL-GroES system forms a nano-cage that allows encapsulation of the non-native substrate proteins and provides a physical environment optimized to promote and accelerate protein folding. This Colwellia maris protein is Chaperonin GroEL.